We begin with the raw amino-acid sequence, 219 residues long: Ribose-5-phosphate isomerase A (219 aa).

Residues 28-31 (TGST), 81-84 (DGAD), and 94-97 (KGGG) contribute to the substrate site. The active-site Proton acceptor is E103. Substrate is bound at residue K121.

Belongs to the ribose 5-phosphate isomerase family. In terms of assembly, homodimer.

It catalyses the reaction aldehydo-D-ribose 5-phosphate = D-ribulose 5-phosphate. It functions in the pathway carbohydrate degradation; pentose phosphate pathway; D-ribose 5-phosphate from D-ribulose 5-phosphate (non-oxidative stage): step 1/1. Catalyzes the reversible conversion of ribose-5-phosphate to ribulose 5-phosphate. In Acidithiobacillus ferrooxidans (strain ATCC 23270 / DSM 14882 / CIP 104768 / NCIMB 8455) (Ferrobacillus ferrooxidans (strain ATCC 23270)), this protein is Ribose-5-phosphate isomerase A.